Here is a 298-residue protein sequence, read N- to C-terminus: ADP/ATP translocase 2 (298 aa).

Methionine 1 carries the N-acetylmethionine modification. The Mitochondrial intermembrane segment spans residues 1 to 7 (MTDAAVS). Threonine 2 is modified (N-acetylthreonine; in ADP/ATP translocase 2, N-terminally processed). One copy of the Solcar 1 repeat lies at 6 to 98 (VSFAKDFLAG…FAFKDKYKQI (93 aa)). A Phosphoserine modification is found at serine 7. The chain crosses the membrane as a helical span at residues 8–37 (FAKDFLAGGVAAAISKTAVAPIERVKLLLQ). Lysine 23 bears the N6-malonyllysine mark. Residues 38-74 (VQHASKQITADKQYKGIIDCVVRIPKEQGVLSFWRGN) lie on the Mitochondrial matrix side of the membrane. The residue at position 43 (lysine 43) is an N6-succinyllysine. Lysine 52 bears the N6,N6,N6-trimethyllysine; alternate mark. At lysine 52 the chain carries N6,N6-dimethyllysine; alternate. The residue at position 52 (lysine 52) is an N6-methyllysine; alternate. The helical transmembrane segment at 75 to 99 (LANVIRYFPTQALNFAFKDKYKQIF) threads the bilayer. ADP is bound by residues arginine 80 and lysine 92. Residues lysine 92 and lysine 96 each carry the N6-malonyllysine modification. Over 100–109 (LGGVDKRTQF) the chain is Mitochondrial intermembrane. Lysine 105 is subject to N6-acetyllysine; alternate. Lysine 105 bears the N6-succinyllysine; alternate mark. A helical membrane pass occupies residues 110-130 (WRYFAGNLASGGAAGATSLCF). Solcar repeat units lie at residues 111–201 (RYFA…AKGM) and 212–297 (ISWM…IKKF). Residues 131-178 (VYPLDFARTRLAADVGKAGAEREFRGLGDCLVKIYKSDGIRGLYQGFN) are Mitochondrial matrix-facing. Lysine 147 is subject to N6-methyllysine; alternate. Lysine 147 carries the post-translational modification N6-acetyllysine; alternate. Lysine 147 carries the N6-succinyllysine; alternate modification. Lysine 147 bears the N6-malonyllysine; alternate mark. N6-acetyllysine is present on residues lysine 163 and lysine 166. Residues 179–199 (VSVQGIIIYRAAYFGIYDTAK) form a helical membrane-spanning segment. At 200–210 (GMLPDPKNTHI) the chain is on the mitochondrial intermembrane side. Residues 211 to 231 (FISWMIAQSVTAVAGLTSYPF) form a helical membrane-spanning segment. The Mitochondrial matrix portion of the chain corresponds to 232–273 (DTVRRRMMMQSGRKGTDIMYTGTLDCWRKIARDEGAKAFFKG). Residue arginine 235 coordinates ADP. The segment at 235–240 (RRRMMM) is important for transport activity. The Nucleotide carrier signature motif signature appears at 235-240 (RRRMMM). At lysine 268 the chain carries N6-acetyllysine; alternate. Lysine 268 carries the N6-succinyllysine; alternate modification. The helical transmembrane segment at 274–291 (AWSNVLRGMGGAFVLVLY) threads the bilayer. Over 292–298 (DEIKKFT) the chain is Mitochondrial intermembrane.

This sequence belongs to the mitochondrial carrier (TC 2.A.29) family. As to quaternary structure, monomer. Component of the MMXD complex, which includes CIAO1, ERCC2, CIAO2B, MMS19 and SLC25A5/ANT2. Interacts with AK4. Interacts with TIMM44; leading to inhibit the presequence translocase TIMM23, thereby promoting stabilization of PINK1. In terms of processing, trimethylated by ANTKMT at Lys-52.

Its subcellular location is the mitochondrion inner membrane. It is found in the membrane. It catalyses the reaction ADP(in) + ATP(out) = ADP(out) + ATP(in). It carries out the reaction H(+)(in) = H(+)(out). The matrix-open state (m-state) is inhibited by the membrane-permeable bongkrekic acid (BKA). The cytoplasmic-open state (c-state) is inhibited by the membrane-impermeable toxic inhibitor carboxyatractyloside (CATR). Proton transporter activity is inhibited by ADP:ATP antiporter activity. Its function is as follows. ADP:ATP antiporter that mediates import of ADP into the mitochondrial matrix for ATP synthesis, and export of ATP out to fuel the cell. Cycles between the cytoplasmic-open state (c-state) and the matrix-open state (m-state): operates by the alternating access mechanism with a single substrate-binding site intermittently exposed to either the cytosolic (c-state) or matrix (m-state) side of the inner mitochondrial membrane. In addition to its ADP:ATP antiporter activity, also involved in mitochondrial uncoupling and mitochondrial permeability transition pore (mPTP) activity. Plays a role in mitochondrial uncoupling by acting as a proton transporter: proton transport uncouples the proton flows via the electron transport chain and ATP synthase to reduce the efficiency of ATP production and cause mitochondrial thermogenesis. Proton transporter activity is inhibited by ADP:ATP antiporter activity, suggesting that SLC25A5/ANT2 acts as a master regulator of mitochondrial energy output by maintaining a delicate balance between ATP production (ADP:ATP antiporter activity) and thermogenesis (proton transporter activity). Proton transporter activity requires free fatty acids as cofactor, but does not transport it. Probably mediates mitochondrial uncoupling in tissues that do not express UCP1. Also plays a key role in mPTP opening, a non-specific pore that enables free passage of the mitochondrial membranes to solutes of up to 1.5 kDa, and which contributes to cell death. It is however unclear if SLC25A5/ANT2 constitutes a pore-forming component of mPTP or regulates it. Acts as a regulator of mitophagy independently of ADP:ATP antiporter activity: promotes mitophagy via interaction with TIMM44, leading to inhibit the presequence translocase TIMM23, thereby promoting stabilization of PINK1. As part of the mitotic spindle-associated MMXD complex it may play a role in chromosome segregation. The chain is ADP/ATP translocase 2 from Bos taurus (Bovine).